We begin with the raw amino-acid sequence, 188 residues long: Ion-translocating oxidoreductase complex subunit B (188 aa).

Residues 1-23 (MFTAIWVMVGLAIAIGLILGWSA) form a hydrophobic region. Residues 29-88 (EGNPLAEKIDAILPQTQCGQCGFPGCRPYAEAIAKGEADINQCPPGGEEGVKKLAELLGV) enclose the 4Fe-4S domain. Residues C46, C49, C54, C71, C113, C116, C119, C123, C143, C146, C149, and C153 each contribute to the [4Fe-4S] cluster site. 2 consecutive 4Fe-4S ferredoxin-type domains span residues 104–133 (SVAF…GAAK) and 134–163 (QMHT…MVPI).

It belongs to the 4Fe4S bacterial-type ferredoxin family. RnfB subfamily. In terms of assembly, the complex is composed of six subunits: RnfA, RnfB, RnfC, RnfD, RnfE and RnfG. The cofactor is [4Fe-4S] cluster.

The protein localises to the cell inner membrane. Its function is as follows. Part of a membrane-bound complex that couples electron transfer with translocation of ions across the membrane. The sequence is that of Ion-translocating oxidoreductase complex subunit B from Thiobacillus denitrificans (strain ATCC 25259 / T1).